We begin with the raw amino-acid sequence, 526 residues long: Bifunctional purine biosynthesis protein PurH (526 aa).

Residues 1-147 enclose the MGS-like domain; the sequence is MTKIERALIS…KNWAHVAIVT (147 aa).

It belongs to the PurH family.

The enzyme catalyses (6R)-10-formyltetrahydrofolate + 5-amino-1-(5-phospho-beta-D-ribosyl)imidazole-4-carboxamide = 5-formamido-1-(5-phospho-D-ribosyl)imidazole-4-carboxamide + (6S)-5,6,7,8-tetrahydrofolate. It carries out the reaction IMP + H2O = 5-formamido-1-(5-phospho-D-ribosyl)imidazole-4-carboxamide. Its pathway is purine metabolism; IMP biosynthesis via de novo pathway; 5-formamido-1-(5-phospho-D-ribosyl)imidazole-4-carboxamide from 5-amino-1-(5-phospho-D-ribosyl)imidazole-4-carboxamide (10-formyl THF route): step 1/1. The protein operates within purine metabolism; IMP biosynthesis via de novo pathway; IMP from 5-formamido-1-(5-phospho-D-ribosyl)imidazole-4-carboxamide: step 1/1. The chain is Bifunctional purine biosynthesis protein PurH from Laribacter hongkongensis (strain HLHK9).